A 116-amino-acid polypeptide reads, in one-letter code: Large ribosomal subunit protein bL19 (116 aa).

The protein belongs to the bacterial ribosomal protein bL19 family.

Functionally, this protein is located at the 30S-50S ribosomal subunit interface and may play a role in the structure and function of the aminoacyl-tRNA binding site. The polypeptide is Large ribosomal subunit protein bL19 (Geobacillus sp. (strain WCH70)).